Here is a 319-residue protein sequence, read N- to C-terminus: tRNA pseudouridine synthase B (319 aa).

The active-site Nucleophile is the aspartate 49.

It belongs to the pseudouridine synthase TruB family. Type 1 subfamily.

It carries out the reaction uridine(55) in tRNA = pseudouridine(55) in tRNA. In terms of biological role, responsible for synthesis of pseudouridine from uracil-55 in the psi GC loop of transfer RNAs. The protein is tRNA pseudouridine synthase B of Bartonella henselae (strain ATCC 49882 / DSM 28221 / CCUG 30454 / Houston 1) (Rochalimaea henselae).